A 159-amino-acid chain; its full sequence is Acetolactate synthase small subunit (159 aa).

Residues 5–79 (ILSILLENES…DVLKVTEIED (75 aa)) form the ACT domain.

The protein belongs to the acetolactate synthase small subunit family. In terms of assembly, dimer of large and small chains.

It catalyses the reaction 2 pyruvate + H(+) = (2S)-2-acetolactate + CO2. It functions in the pathway amino-acid biosynthesis; L-isoleucine biosynthesis; L-isoleucine from 2-oxobutanoate: step 1/4. Its pathway is amino-acid biosynthesis; L-valine biosynthesis; L-valine from pyruvate: step 1/4. The protein is Acetolactate synthase small subunit (ilvH) of Buchnera aphidicola subsp. Baizongia pistaciae (strain Bp).